Consider the following 242-residue polypeptide: Small ribosomal subunit protein uS2 (242 aa).

It belongs to the universal ribosomal protein uS2 family.

This is Small ribosomal subunit protein uS2 from Aeromonas salmonicida (strain A449).